Here is a 232-residue protein sequence, read N- to C-terminus: Noggin (232 aa).

A signal peptide spans 1 to 27 (MERCPSLGVTLYALVVVLGLRAAPAGG). An N-linked (GlcNAc...) asparagine glycan is attached at Asn62. Residues 77 to 99 (GFMATSPPEDRPGGGGGPAGGAE) are disordered. 4 disulfides stabilise this stretch: Cys155–Cys192, Cys178–Cys228, Cys184–Cys230, and Cys207–Cys215.

This sequence belongs to the noggin family. Homodimer. Interacts with GDF5; inhibits chondrocyte differentiation. Expressed in condensing cartilage and immature chondrocytes.

The protein resides in the secreted. Essential for cartilage morphogenesis and joint formation. Inhibitor of bone morphogenetic proteins (BMP) signaling which is required for growth and patterning of the neural tube and somite. Inhibits chondrocyte differentiation through its interaction with GDF5 and, probably, GDF6. The sequence is that of Noggin (Nog) from Mus musculus (Mouse).